Reading from the N-terminus, the 24-residue chain is Humanin (24 aa).

Positions Met-1–Leu-12 are sufficient to interact with BID and BIM and to suppress BID and BIM activity. Residues Pro-3–Pro-19 form a sufficient for neuroprotective activity region. Positions Gly-5–Leu-12 are sufficient to interact with MPP8. Required for secretion regions lie at residues Leu-9–Leu-11 and Pro-19–Val-20.

In terms of assembly, homodimer. Interacts with amyloid-beta protein 42 (Abeta42); the interaction prevents Abeta42 fibril formation. Interacts with BAX; forms fibers with BAX which results in BAX conformational changes and sequestering of BAX into the fibers, preventing BAX activation. Interacts with both full-length BID and cleaved BID p15; forms fibers with BID which results in BID conformational changes and sequestering of BID into the fibers, preventing BID activation. Interacts with BIM isoform BimEL but not with BIM isoforms BimL or BimS; the interaction prevents BIM-induced apoptosis. Interacts with IGFBP3; competes with importin KPNB1 for binding to IGFBP3, blocking IGFBP3 nuclear import. Interacts with TRIM11. Interacts with MPP8. In terms of tissue distribution, expressed in testis, seminal plasma and sperm (at protein level). Higher seminal plasma levels are associated with normospermia than with oligospermia, asthenospermia or oligoasthenospermia (at protein level). Higher sperm levels are associated with normospermia than with asthenospermia (at protein level). Expressed in retinal epithelial cells (at protein level). Expressed in the heart, skeletal muscle, kidney and liver. Lesser but significant expression is observed in the brain and the gastrointestinal tract. Expressed in the AD brain, where it is found in some of the large intact neurons of the occipital lobes and small and round reactive glial cells in the hippocampus.

It is found in the secreted. The protein resides in the cytoplasm. It localises to the cell projection. The protein localises to the cilium. Its subcellular location is the flagellum. It is found in the nucleus. The protein resides in the mitochondrion. In terms of biological role, plays a role as a neuroprotective factor. Protects against neuronal cell death induced by multiple different familial Alzheimer disease genes and amyloid-beta proteins in Alzheimer disease. Mediates its neuroprotective effect by interacting with a receptor complex composed of IL6ST/GP130, IL27RA/WSX1 and CNTFR. Also acts as a ligand for G-protein coupled receptors FPR2/FPRL1 and FPR3/FPRL2. Inhibits amyloid-beta protein 40 fibril formation. Also inhibits amyloid-beta protein 42 fibril formation. Suppresses apoptosis by binding to BAX and preventing the translocation of BAX from the cytosol to mitochondria. Also suppresses apoptosis by binding to BID and inhibiting the interaction of BID with BAX and BAK which prevents oligomerization of BAX and BAK and suppresses release of apoptogenic proteins from mitochondria. Forms fibers with BAX and also with BID, inducing BAX and BID conformational changes and sequestering them into the fibers which prevents their activation. Can also suppress apoptosis by interacting with BIM isoform BimEL, inhibiting BimEL-induced activation of BAX, blocking oligomerization of BAX and BAK, and preventing release of apoptogenic proteins from mitochondria. Plays a role in up-regulation of anti-apoptotic protein BIRC6/APOLLON, leading to inhibition of neuronal cell death. Binds to IGFBP3 and specifically blocks IGFBP3-induced cell death. Competes with importin KPNB1 for binding to IGFBP3 which is likely to block IGFBP3 nuclear import. Induces chemotaxis of mononuclear phagocytes via FPR2/FPRL1. Reduces aggregation and fibrillary formation by suppressing the effect of APP on mononuclear phagocytes and acts by competitively inhibiting the access of FPR2 to APP. Protects retinal pigment epithelium (RPE) cells against oxidative stress-induced and endoplasmic reticulum (ER) stress-induced apoptosis. Promotes mitochondrial biogenesis in RPE cells following oxidative stress and promotes STAT3 phosphorylation which leads to inhibition of CASP3 release. Also reduces CASP4 levels in RPE cells, suppresses ER stress-induced mitochondrial superoxide production and plays a role in up-regulation of mitochondrial glutathione. Reduces testicular hormone deprivation-induced apoptosis of germ cells at the nonandrogen-sensitive stages of the seminiferous epithelium cycle. Protects endothelial cells against free fatty acid-induced inflammation by suppressing oxidative stress, reducing expression of TXNIP and inhibiting activation of the NLRP3 inflammasome which inhibits expression of pro-inflammatory cytokines IL1B and IL18. Protects against high glucose-induced endothelial cell dysfunction by mediating activation of ERK5 which leads to increased expression of transcription factor KLF2 and prevents monocyte adhesion to endothelial cells. Inhibits the inflammatory response in astrocytes. Increases the expression of PPARGC1A/PGC1A in pancreatic beta cells which promotes mitochondrial biogenesis. Increases insulin sensitivity. The sequence is that of Humanin from Homo sapiens (Human).